The sequence spans 153 residues: Large ribosomal subunit protein uL15 (153 aa).

The interval 1–49 (MQLHNLYPFPEERKTRRRVGRGSGSGLGCTAGKGHKGQNARAGGGVAPG) is disordered. Gly residues predominate over residues 21–31 (RGSGSGLGCTA).

It belongs to the universal ribosomal protein uL15 family. As to quaternary structure, part of the 50S ribosomal subunit.

Binds to the 23S rRNA. This Desulfovibrio desulfuricans (strain ATCC 27774 / DSM 6949 / MB) protein is Large ribosomal subunit protein uL15.